Reading from the N-terminus, the 283-residue chain is Protein FAM78A (283 aa).

Belongs to the FAM78 family.

The protein is Protein FAM78A (FAM78A) of Homo sapiens (Human).